The following is a 362-amino-acid chain: Porin Omp2b (362 aa).

An N-terminal signal peptide occupies residues 1-22 (MNIKSLLLGSAAALVAASGAQA).

The protein belongs to the alphaproteobacteria porin family. As to quaternary structure, homotrimer.

It localises to the cell outer membrane. Forms passive diffusion pores that allow small molecular weight hydrophilic materials across the outer membrane. This chain is Porin Omp2b (omp2b), found in Brucella suis biovar 1 (strain 1330).